We begin with the raw amino-acid sequence, 115 residues long: MTDKFYFYGLFWGILLFVFLQHMQGNVPPTPLPPLSSEDLVNRSATPQLPPTCDGNATTFGGVKFPKKKTPPACACKVLEKFSCMGSFGCIGYSWGCSCCCFKSCKNVTTSPLLQ.

An N-terminal signal peptide occupies residues 1–25 (MTDKFYFYGLFWGILLFVFLQHMQG).

This chain is Protein E6A (12), found in Equine herpesvirus 2 (strain 86/87) (EHV-2).